The chain runs to 132 residues: Large ribosomal subunit protein uL22c (132 aa).

The protein belongs to the universal ribosomal protein uL22 family. As to quaternary structure, part of the 50S ribosomal subunit.

It localises to the plastid. The protein resides in the chloroplast. In terms of biological role, this protein binds specifically to 23S rRNA. Its function is as follows. The globular domain of the protein is located near the polypeptide exit tunnel on the outside of the subunit, while an extended beta-hairpin is found that lines the wall of the exit tunnel in the center of the 70S ribosome. The polypeptide is Large ribosomal subunit protein uL22c (rpl22) (Populus alba (White poplar)).